Reading from the N-terminus, the 970-residue chain is MPVKKQEAHRALELLEDYHARLSEPQDRALRIAIERVIRIFKSRLFQALLDIQEFYELTLLDDSKSIQQKTAETLQIATKWEKDGQAVKIADFIKSSNLNRNCAYEFNNDASSNQTNQSALNQNPIANNVSAQAQAEALSRTFKSELEEILNQRMRIESDTENAKEPTVEQQQKQQQAQQRSSRSPQQQNPQQQQGSKSRSGSQTVNGDDSWLYEDIQLERGNSGLGFSIAGGTDNPHIGTDTSIYITKLISGGAAAADGRLSINDIIVSVNDVSVVDVPHASAVDALKKAGNVVKLHVKRKRGTATTPAAGSAAGDARDSAASGPKVIEIDLVKGGKGLGFSIAGGIGNQHIPGDNGIYVTKLMDGGAAQVDGRLSIGDKLIAVRTNGSEKNLENVTHELAVATLKSITDKVTLIIGKTQHLTTSASGGGGGGLSSGQQLSQSQSQLATSQSQSQVHQQQHATPMVNSQSTEPGSRYASTNVLAAVPPGTPRAVSTEDITREPRTITIQKGPQGLGFNIVGGEDGQGIYVSFILAGGPADLGSELKRGDQLLSVNNVNLTHATHEEAAQALKTSGGVVTLLAQYRPEEYNRFEARIQELKQQAALGAGGSGTLLRTTQKRSLYVRALFDYDPNRDDGLPSRGLPFKHGDILHVTNASDDEWWQARRVLGDNEDEQIGIVPSKRRWERKMRARDRSVKFQGHAAANNNLDKQSTLDRKKKNFTFSRKFPFMKSRDEKNEDGSDQEPFMLCYTQDDANAEGASEENVLSYEAVQRLSINYTRPVIILGPLKDRINDDLISEYPDKFGSCVPHTTRPKREYEVDGRDYHFVSSREQMERDIQNHLFIEAGQYNDNLYGTSVASVREVAEKGKHCILDVSGNAIKRLQVAQLYPVAVFIKPKSVDSVMEMNRRMTEEQAKKTYERAIKMEQEFGEYFTGVVQGDTIEEIYSKVKSMIWSQSGPTIWVPSKESL.

Positions 4 to 64 constitute an L27 domain; the sequence is KKQEAHRALE…FYELTLLDDS (61 aa). Residues 161–209 are disordered; sequence TENAKEPTVEQQQKQQQAQQRSSRSPQQQNPQQQQGSKSRSGSQTVNGD. The segment covering 171-204 has biased composition (low complexity); that stretch reads QQQKQQQAQQRSSRSPQQQNPQQQQGSKSRSGSQ. 2 consecutive PDZ domains span residues 216 to 303 and 330 to 421; these read DIQL…KRKR and EIDL…GKTQ. Residues 424–477 are disordered; that stretch reads TTSASGGGGGGLSSGQQLSQSQSQLATSQSQSQVHQQQHATPMVNSQSTEPGSR. Residues 437–462 show a composition bias toward low complexity; that stretch reads SGQQLSQSQSQLATSQSQSQVHQQQH. Residues 466–477 are compositionally biased toward polar residues; it reads MVNSQSTEPGSR. Position 496 is a phosphoserine (S496). The PDZ 3 domain occupies 506-587; the sequence is TITIQKGPQG…VVTLLAQYRP (82 aa). Residues 620–690 enclose the SH3 domain; that stretch reads KRSLYVRALF…PSKRRWERKM (71 aa). Phosphothreonine is present on T714. A Guanylate kinase-like domain is found at 780–955; the sequence is TRPVIILGPL…IYSKVKSMIW (176 aa).

Belongs to the MAGUK family. As to expression, during the cellular blastoderm stage, isoform B, isoform F, isoform H, isoform I and isoform L expression is localized to the cell borders. From stage 11 onwards, expression is found predominantly in the developing nervous system: axon bundles in the ventral cord and the brain. Stage 14 and 15 embryos exhibit expression in the developing body wall muscle. Expression in neuropil regions of the CNS and at NMJs persists through to larval development. Other isoforms show expression in embryonic epithelial cells. In larvae, expression is seen as a belt around salivary glands, imaginal disks and proventriculus. Expressed in adult reproductive tissues. In epithelia, coexpressed with scrib throughout development.

Its subcellular location is the cytoplasm. It is found in the cell membrane. It localises to the basolateral cell membrane. The protein localises to the cytoskeleton. The protein resides in the cell junction. Its subcellular location is the septate junction. Functionally, during embryonic development, some isoforms are essential for proper neuronal differentiation and organization. Required for cell polarity; maintenance of apicobasal polarity. Plays a critical role at septate junctions in cellular growth control during larval development. The presence of a guanylate kinase domain suggests involvement in cellular adhesion as well as signal transduction to control cellular proliferation. In Drosophila melanogaster (Fruit fly), this protein is Disks large 1 tumor suppressor protein (dlg1).